Reading from the N-terminus, the 200-residue chain is MIKLIVGLGNPGAEYTATRHNAGFWLVDQLAREAGTTLRDERRFHGFYAKARLHGEEVHLLEPQTYMNRSGQSVVALAQFFKILPDEILVAHDELDMPPGSVKLKLGGGSGGHNGLKDITAHLSSQQYWRLRIGIGHPRDLIPESARAGARPDVANYVLKPPRREEQDVIDASIERALAVMPQVIKGELERAMMQLHRNP.

Y15 contributes to the tRNA binding site. H20 (proton acceptor) is an active-site residue. Residues Y66, N68, and N114 each coordinate tRNA.

It belongs to the PTH family. Monomer.

The protein localises to the cytoplasm. It catalyses the reaction an N-acyl-L-alpha-aminoacyl-tRNA + H2O = an N-acyl-L-amino acid + a tRNA + H(+). Its function is as follows. Hydrolyzes ribosome-free peptidyl-tRNAs (with 1 or more amino acids incorporated), which drop off the ribosome during protein synthesis, or as a result of ribosome stalling. Catalyzes the release of premature peptidyl moieties from peptidyl-tRNA molecules trapped in stalled 50S ribosomal subunits, and thus maintains levels of free tRNAs and 50S ribosomes. The chain is Peptidyl-tRNA hydrolase from Paraburkholderia xenovorans (strain LB400).